Consider the following 124-residue polypeptide: Large ribosomal subunit protein bL20 (124 aa).

The protein belongs to the bacterial ribosomal protein bL20 family.

Binds directly to 23S ribosomal RNA and is necessary for the in vitro assembly process of the 50S ribosomal subunit. It is not involved in the protein synthesizing functions of that subunit. This chain is Large ribosomal subunit protein bL20, found in Ehrlichia chaffeensis (strain ATCC CRL-10679 / Arkansas).